The following is a 393-amino-acid chain: G protein-activated inward rectifier potassium channel 3 (393 aa).

Positions 1–23 (MAQENAAFSPGSEEPPRRRGRQR) are disordered. Residues 1 to 57 (MAQENAAFSPGSEEPPRRRGRQRYVEKDGRCNVQQGNVRETYRYLTDLFTTLVDLQW) are Cytoplasmic-facing. A helical membrane pass occupies residues 58–82 (RLSLLFFVLAYALTWLFFGAIWWLI). Residues 83–106 (AYGRGDLEHLEDTAWTPCVNNLNG) lie on the Extracellular side of the membrane. The segment at residues 107–118 (FVAAFLFSIETE) is an intramembrane region (helical; Pore-forming). The segment at residues 119–125 (TTIGYGH) is an intramembrane region (pore-forming). The Selectivity filter signature appears at 120-125 (TIGYGH). The Extracellular portion of the chain corresponds to 126–134 (RVITDQCPE). The chain crosses the membrane as a helical span at residues 135–156 (GIVLLLLQAILGSMVNAFMVGC). Residues 157–393 (MFVKISQPNK…LPPPESESKV (237 aa)) lie on the Cytoplasmic side of the membrane. The segment at 360 to 393 (KVEEEGAGEGAGAGDGADKEHNGCLPPPESESKV) is disordered. Positions 384–393 (LPPPESESKV) are enriched in pro residues. Residues 390-393 (ESKV) carry the PDZ-binding motif.

Belongs to the inward rectifier-type potassium channel (TC 1.A.2.1) family. KCNJ9 subfamily. As to quaternary structure, associates with KCNJ3/GIRK1 to form a G-protein-activated heteromultimer pore-forming unit. Interacts (via PDZ-binding motif) with SNX27 (via PDZ domain); the interaction is required when endocytosed to prevent degradation in lysosomes and promote recycling to the plasma membrane. Expressed mainly in the brain, some expression in the skeletal muscle.

It localises to the membrane. The catalysed reaction is K(+)(in) = K(+)(out). Inward rectifier potassium channels are characterized by a greater tendency to allow potassium to flow into the cell rather than out of it. Their voltage dependence is regulated by the concentration of extracellular potassium; as external potassium is raised, the voltage range of the channel opening shifts to more positive voltages. The inward rectification is mainly due to the blockage of outward current by internal magnesium. This receptor is controlled by G proteins. Unable to produce channel activity when expressed alone. Forms a functional channel in association with KCNJ3/GIRK1. This chain is G protein-activated inward rectifier potassium channel 3 (Kcnj9), found in Mus musculus (Mouse).